Here is a 620-residue protein sequence, read N- to C-terminus: Probable potassium transport system protein Kup 2 (620 aa).

The next 12 helical transmembrane spans lie at 10 to 30, 50 to 70, 102 to 122, 136 to 156, 168 to 188, 211 to 231, 246 to 266, 284 to 304, 336 to 356, 368 to 388, 393 to 413, and 415 to 435; these read LLVSAVGVVFGDIGTSPLYAL, VLSLVFWTVMLLVTVKYVIVI, MMLGVIAAALFYGDSMITPAI, PDLRPYVVPITAVVLTALFAI, FGPVMCLWFITLAVLGIVNVI, LMSFYALGSVVLAVTGGEALY, WFCLVLPALLLNYFGQGALLI, MVVPLVALATFAAVIASQAVI, IYVPFTNWTLYLAVMALVVGF, IAVTSTMMIDTILVSFVMALL, MALVITVVGTLLAVDIAFFSA, and IIKVAQGGWFPLFIGFISFTV.

This sequence belongs to the HAK/KUP transporter (TC 2.A.72) family.

Its subcellular location is the cell inner membrane. The enzyme catalyses K(+)(in) + H(+)(in) = K(+)(out) + H(+)(out). Transport of potassium into the cell. Likely operates as a K(+):H(+) symporter. The polypeptide is Probable potassium transport system protein Kup 2 (Rhodopseudomonas palustris (strain BisB5)).